A 61-amino-acid polypeptide reads, in one-letter code: Metallothionein-2D (61 aa).

The residue at position 1 (Met-1) is an N-acetylmethionine. Positions 1–29 (MDPNCSCATRDSCACASSCKCKECKCTSC) are beta. Cys-5, Cys-7, Cys-13, Cys-15, Cys-19, Cys-21, Cys-24, Cys-26, Cys-29, Cys-33, Cys-34, Cys-36, Cys-37, Cys-41, Cys-44, Cys-48, Cys-50, Cys-57, Cys-59, and Cys-60 together coordinate a divalent metal cation. The interval 30-61 (KKSCCSCCPAGCTKCAQGCICKGASDKCSCCA) is alpha.

Belongs to the metallothionein superfamily. Type 1 family. As to quaternary structure, monomer.

Metallothioneins have a high content of cysteine residues that bind various heavy metals; these proteins are transcriptionally regulated by both heavy metals and glucocorticoids. This chain is Metallothionein-2D, found in Oryctolagus cuniculus (Rabbit).